The chain runs to 214 residues: Pyridoxine/pyridoxamine 5'-phosphate oxidase (214 aa).

Substrate is bound by residues 9–12 and Lys67; that span reads RKNY. FMN-binding positions include 62-67, 77-78, Lys84, and Gln106; these read RMVLLK and YT. Positions 124, 128, and 132 each coordinate substrate. FMN is bound by residues 141 to 142 and Trp186; that span reads QS. Residue 192-194 coordinates substrate; sequence RLH. Arg196 is an FMN binding site.

The protein belongs to the pyridoxamine 5'-phosphate oxidase family. As to quaternary structure, homodimer. FMN is required as a cofactor.

The enzyme catalyses pyridoxamine 5'-phosphate + O2 + H2O = pyridoxal 5'-phosphate + H2O2 + NH4(+). The catalysed reaction is pyridoxine 5'-phosphate + O2 = pyridoxal 5'-phosphate + H2O2. Its pathway is cofactor metabolism; pyridoxal 5'-phosphate salvage; pyridoxal 5'-phosphate from pyridoxamine 5'-phosphate: step 1/1. It participates in cofactor metabolism; pyridoxal 5'-phosphate salvage; pyridoxal 5'-phosphate from pyridoxine 5'-phosphate: step 1/1. Its function is as follows. Catalyzes the oxidation of either pyridoxine 5'-phosphate (PNP) or pyridoxamine 5'-phosphate (PMP) into pyridoxal 5'-phosphate (PLP). The sequence is that of Pyridoxine/pyridoxamine 5'-phosphate oxidase from Gloeothece citriformis (strain PCC 7424) (Cyanothece sp. (strain PCC 7424)).